The chain runs to 454 residues: tRNA modification GTPase MnmE (454 aa).

Positions 23, 80, and 120 each coordinate (6S)-5-formyl-5,6,7,8-tetrahydrofolate. The TrmE-type G domain maps to 216-377 (GMKVVIAGRP…LRNHLKQSMG (162 aa)). A K(+)-binding site is contributed by asparagine 226. GTP contacts are provided by residues 226–231 (NAGKSS), 245–251 (TDIAGTT), 270–273 (DTAG), 335–338 (NKAD), and 358–360 (SAR). Serine 230 contacts Mg(2+). Residues threonine 245, isoleucine 247, and threonine 250 each contribute to the K(+) site. Threonine 251 serves as a coordination point for Mg(2+). Residue lysine 454 coordinates (6S)-5-formyl-5,6,7,8-tetrahydrofolate.

It belongs to the TRAFAC class TrmE-Era-EngA-EngB-Septin-like GTPase superfamily. TrmE GTPase family. Homodimer. Heterotetramer of two MnmE and two MnmG subunits. K(+) is required as a cofactor.

It localises to the cytoplasm. Its function is as follows. Exhibits a very high intrinsic GTPase hydrolysis rate. Involved in the addition of a carboxymethylaminomethyl (cmnm) group at the wobble position (U34) of certain tRNAs, forming tRNA-cmnm(5)s(2)U34. The polypeptide is tRNA modification GTPase MnmE (Salmonella choleraesuis (strain SC-B67)).